A 535-amino-acid polypeptide reads, in one-letter code: KNR4/SMI1 homolog (535 aa).

Positions 354-363 (ERKLPEEPKR) are enriched in basic and acidic residues. The disordered stretch occupies residues 354–535 (ERKLPEEPKR…LKDDFENVAL (182 aa)). Composition is skewed to polar residues over residues 364–384 (TVSS…QETA), 397–407 (TSLSVDNTGTK), and 456–469 (ESTN…TSQE). Over residues 474–483 (TSEKPEEKPK) the composition is skewed to basic and acidic residues. The segment covering 484 to 494 (KQSKKASKKKG) has biased composition (basic residues). Basic and acidic residues-rich tracts occupy residues 495-509 (KKDE…TKEP) and 524-535 (EKLKDDFENVAL).

This sequence belongs to the KNR4/SMI1 family.

In Kluyveromyces lactis (strain ATCC 8585 / CBS 2359 / DSM 70799 / NBRC 1267 / NRRL Y-1140 / WM37) (Yeast), this protein is KNR4/SMI1 homolog.